The chain runs to 218 residues: Probable transaldolase (218 aa).

Catalysis depends on lysine 84, which acts as the Schiff-base intermediate with substrate.

The protein belongs to the transaldolase family. Type 3B subfamily.

It is found in the cytoplasm. It carries out the reaction D-sedoheptulose 7-phosphate + D-glyceraldehyde 3-phosphate = D-erythrose 4-phosphate + beta-D-fructose 6-phosphate. Its pathway is carbohydrate degradation; pentose phosphate pathway; D-glyceraldehyde 3-phosphate and beta-D-fructose 6-phosphate from D-ribose 5-phosphate and D-xylulose 5-phosphate (non-oxidative stage): step 2/3. In terms of biological role, transaldolase is important for the balance of metabolites in the pentose-phosphate pathway. This chain is Probable transaldolase, found in Bartonella henselae (strain ATCC 49882 / DSM 28221 / CCUG 30454 / Houston 1) (Rochalimaea henselae).